Reading from the N-terminus, the 589-residue chain is PTS system mannitol-specific EIICB component (589 aa).

The Cytoplasmic segment spans residues 1 to 25 (MERKSSLKVRVQKLGTSLSNMVMPN). Residues 14–347 (LGTSLSNMVM…ILKSDNSDDD (334 aa)) enclose the PTS EIIC type-2 domain. The chain crosses the membrane as a helical span at residues 26-47 (IGAFIAWGVAASLFIATGYLPN). Residues 48–51 (KALD) are Extracellular-facing. The chain crosses the membrane as a helical span at residues 52 to 73 (TNVVGPMLKYVLPLLIGYTGGY). Topologically, residues 74 to 136 (NIHKQRGGVI…TGFEMLVNNF (63 aa)) are cytoplasmic. The chain crosses the membrane as a helical span at residues 137-158 (SLGLIGFALMVLAFFVIGPVVA). At 159-167 (QLTEWVGIG) the chain is on the extracellular side. The helical transmembrane segment at 168–188 (VEAIVKVHLLPLANLIIEPAK) threads the bilayer. Residues 189 to 275 (ILFLNNALNH…VMMKPAMFLA (87 aa)) lie on the Cytoplasmic side of the membrane. The helical transmembrane segment at 276–295 (VIAGGLTGTFTFQTLGAGLT) threads the bilayer. Topologically, residues 296–317 (APASPGSIIAIMGMSPKGWGPH) are extracellular. A helical membrane pass occupies residues 318–339 (LVVLAGVFAAAVASFLVASIIL). The Cytoplasmic portion of the chain corresponds to 340–589 (KSDNSDDDSL…YDKLVARMHK (250 aa)). In terms of domain architecture, PTS EIIB type-2 spans 383-478 (HQIIFACDAG…SLTNGKASGS (96 aa)). The active-site Phosphocysteine intermediate; for EIIB activity is Cys-389. At Cys-389 the chain carries Phosphocysteine; by EIIA.

Homodimer.

The protein resides in the cell membrane. The enzyme catalyses D-mannitol(out) + N(pros)-phospho-L-histidyl-[protein] = D-mannitol 1-phosphate(in) + L-histidyl-[protein]. Its function is as follows. The phosphoenolpyruvate-dependent sugar phosphotransferase system (sugar PTS), a major carbohydrate active transport system, catalyzes the phosphorylation of incoming sugar substrates concomitantly with their translocation across the cell membrane. The enzyme II CmtAB PTS system is involved in D-mannitol transport. This Streptococcus mutans serotype c (strain ATCC 700610 / UA159) protein is PTS system mannitol-specific EIICB component.